Reading from the N-terminus, the 617-residue chain is Estrogen receptor (617 aa).

The segment at 1–54 (MSEEQARAEAPAGARQRRRSELEGYSVSLASLKLSPMYPEEEQRTTGGISSTAH) is disordered. The interval 1–186 (MSEEQARAEA…AIGLVKEIRY (186 aa)) is modulating. 2 consecutive NR C4-type zinc fingers follow at residues 187–207 (CSVC…CEGC) and 223–247 (CPAT…LRKC). The nuclear receptor DNA-binding region spans 187–252 (CSVCSDYASG…RLRKCYEVGM (66 aa)). A hinge region spans residues 253–315 (MKGGFRKERG…GGGVADVVCM (63 aa)). The segment at 269–303 (NRRPSGLKERERGYSKAQSGSDVREALPQDGQSSS) is disordered. An NR LBD domain is found at 316–552 (SPEQVLLLLL…DLLLEMLDAH (237 aa)). The disordered stretch occupies residues 568 to 617 (VSSSPTTTATTPTTNTTTTTTTTTHHPSNGSTCPADLPSNPPGPGQSPSP). Over residues 573–591 (TTTATTPTTNTTTTTTTTT) the composition is skewed to low complexity. The span at 606 to 617 (SNPPGPGQSPSP) shows a compositional bias: pro residues.

The protein belongs to the nuclear hormone receptor family. NR3 subfamily. As to quaternary structure, binds DNA as a homodimer. Can form a heterodimer with ER-beta. In terms of tissue distribution, ovary and testis.

It localises to the nucleus. Its function is as follows. The steroid hormones and their receptors are involved in the regulation of eukaryotic gene expression and affect cellular proliferation and differentiation in target tissues. In Ictalurus punctatus (Channel catfish), this protein is Estrogen receptor (esr1).